The primary structure comprises 585 residues: MAPMSIADLVAALPAEDTWGPATPSDNMLDGVPYAPFSKGDKLGRMADWTGDGKDRDRGGRQAYNRNYRDQQVYGAGTSSLFNIQVAEDESSFSVVDNTRTSTKRTFARGGGTVFRGRGQRGVGQRGGRAGFQRVGAGRGQGGDRYYDNRSARGNRGRRFGWKDYDKPQRTREPSVNVRPDWTMLEEVDFNRLSKLNLEAPEGEDLDSYGFLYYYDRSYDKAPVKNAERKLQALERAAYNVTTSQDPVIQELAEKNEATVFATSDILSMLMCAPRSVYSWDIVIVHQGDKIYFDKREGASIDLVTVNENAADAPMETTDSSGKQESINTPSALALEATFINHNFALQTVVESEESKVTFSHPNPFYNAAEETEPLASKGYKYRRFDLSLQGDEEPLNMIVRTEVDAVMKNPVGGEDQQLIVKALNEFDSKAPGSGGALDWRSKLWSQRGAVVATEMKNNSIKLARWTTQAILAKADAMKLGFISRANPRSATSHVILGVVGYKPREFAAQMNLNLGNGWGIVRTIVDRIRSLDAEEEEDKVKKYVLIKDPNRPVIRLYSVPPNTFEEDDEAAEEQEEKAEEESEE.

Over residues 43–60 the composition is skewed to basic and acidic residues; the sequence is LGRMADWTGDGKDRDRGG. Disordered regions lie at residues 43–62 and 109–152; these read LGRM…GGRQ and RGGG…NRSA. The segment covering 109 to 130 has biased composition (gly residues); sequence RGGGTVFRGRGQRGVGQRGGRA. Residues 300-314 form an RNA gate region; the sequence is SIDLVTVNENAADAP. Residues 560-585 form a disordered region; the sequence is VPPNTFEEDDEAAEEQEEKAEEESEE. The segment covering 565-585 has biased composition (acidic residues); the sequence is FEEDDEAAEEQEEKAEEESEE.

This sequence belongs to the eIF-3 subunit D family. As to quaternary structure, component of the eukaryotic translation initiation factor 3 (eIF-3) complex.

The protein localises to the cytoplasm. Functionally, mRNA cap-binding component of the eukaryotic translation initiation factor 3 (eIF-3) complex, which is involved in protein synthesis of a specialized repertoire of mRNAs and, together with other initiation factors, stimulates binding of mRNA and methionyl-tRNAi to the 40S ribosome. The eIF-3 complex specifically targets and initiates translation of a subset of mRNAs involved in cell proliferation. In the eIF-3 complex, eif3d specifically recognizes and binds the 7-methylguanosine cap of a subset of mRNAs. The sequence is that of Eukaryotic translation initiation factor 3 subunit D from Neosartorya fischeri (strain ATCC 1020 / DSM 3700 / CBS 544.65 / FGSC A1164 / JCM 1740 / NRRL 181 / WB 181) (Aspergillus fischerianus).